We begin with the raw amino-acid sequence, 417 residues long: Hydrogen cyanide synthase subunit HcnC (417 aa).

An N-terminal signal peptide occupies residues 1-18; the sequence is MIKHYDVVIAGGGVIGAS. 7-21 contacts FAD; that stretch reads VVIAGGGVIGASCAY. A lipid anchor (N-palmitoyl cysteine) is attached at C19. C19 carries S-diacylglycerol cysteine lipidation. A helical transmembrane segment spans residues 46 to 66; that stretch reads SAGGLWAIGESVGLGCGVIFF.

The protein belongs to the FAD-dependent glycerol-3-phosphate dehydrogenase family. As to quaternary structure, heterotrimer of HcnA, HcnB and HcnC.

It is found in the cell membrane. The catalysed reaction is glycine + 2 A = hydrogen cyanide + 2 AH2 + CO2. A three-component membrane-bound flavoenzyme that catalyzes the formation of hydrogen cyanide, a secondary metabolite, by transfer of electrons to a cyanide-resistant branch of the aerobic respiratory chain. Contributes to suppression of black root rot of tobacco. In Pseudomonas protegens (strain DSM 19095 / LMG 27888 / CFBP 6595 / CHA0), this protein is Hydrogen cyanide synthase subunit HcnC.